Here is a 189-residue protein sequence, read N- to C-terminus: Elongation factor P (189 aa).

Belongs to the elongation factor P family.

Its subcellular location is the cytoplasm. The protein operates within protein biosynthesis; polypeptide chain elongation. In terms of biological role, involved in peptide bond synthesis. Stimulates efficient translation and peptide-bond synthesis on native or reconstituted 70S ribosomes in vitro. Probably functions indirectly by altering the affinity of the ribosome for aminoacyl-tRNA, thus increasing their reactivity as acceptors for peptidyl transferase. The polypeptide is Elongation factor P (Chloroflexus aggregans (strain MD-66 / DSM 9485)).